Consider the following 238-residue polypeptide: Ribonuclease PH (238 aa).

Phosphate is bound by residues Arg-86 and 124-126 (GTR).

This sequence belongs to the RNase PH family. Homohexameric ring arranged as a trimer of dimers.

It catalyses the reaction tRNA(n+1) + phosphate = tRNA(n) + a ribonucleoside 5'-diphosphate. Phosphorolytic 3'-5' exoribonuclease that plays an important role in tRNA 3'-end maturation. Removes nucleotide residues following the 3'-CCA terminus of tRNAs; can also add nucleotides to the ends of RNA molecules by using nucleoside diphosphates as substrates, but this may not be physiologically important. Probably plays a role in initiation of 16S rRNA degradation (leading to ribosome degradation) during starvation. The sequence is that of Ribonuclease PH from Pectobacterium atrosepticum (strain SCRI 1043 / ATCC BAA-672) (Erwinia carotovora subsp. atroseptica).